The sequence spans 329 residues: Mas-related G-protein coupled receptor member X2 (329 aa).

The Extracellular portion of the chain corresponds to M1–S33. Residues V34–L54 form a helical membrane-spanning segment. At L55–A63 the chain is on the cytoplasmic side. A helical membrane pass occupies residues F64–I84. At N85–S96 the chain is on the extracellular side. A helical membrane pass occupies residues I97–L117. The Cytoplasmic segment spans residues S118–H144. The helical transmembrane segment at L145 to G165 threads the bilayer. Over K166–D183 the chain is Extracellular. The helical transmembrane segment at L184–L204 threads the bilayer. Residues L205–T227 lie on the Cytoplasmic side of the membrane. A helical transmembrane segment spans residues V228–I248. The Extracellular segment spans residues W249–S263. Residues V264–F284 form a helical membrane-spanning segment. The Cytoplasmic portion of the chain corresponds to R285–V329.

Belongs to the G-protein coupled receptor 1 family. Mas subfamily.

It localises to the cell membrane. In terms of biological role, mast cell-specific receptor for basic secretagogues, i.e. cationic amphiphilic drugs, as well as endo- or exogenous peptides, consisting of a basic head group and a hydrophobic core. Recognizes and binds small molecules containing a cyclized tetrahydroisoquinoline (THIQ), such as non-steroidal neuromuscular blocking drugs (NMBDs), including tubocurarine and atracurium. In response to these compounds, mediates pseudo-allergic reactions characterized by histamine release, inflammation and airway contraction. This Pan troglodytes (Chimpanzee) protein is Mas-related G-protein coupled receptor member X2 (MRGPRX2).